The sequence spans 205 residues: MPSKKKKYNARFPPARIKKIMQTDEEIGKVAAAVPVIISRALELFLESLLKKACQVTQSRNAKTMTTSHLKQCIELEQQFDFLKDLVASVPDMQGDGEDNHMDGDKGARRGRKPGSGGRKNGGMGTKSKDKKLSGTDSEQEDESEDTDTDGEEETSQPPPQASHPSAHFQSPPTPFLPFASTLPLPPAPPGPSAPDEEDEEDYDS.

Positions 14–77 constitute a Histone-fold domain; it reads PARIKKIMQT…SHLKQCIELE (64 aa). Residues 91 to 205 are disordered; it reads PDMQGDGEDN…DEEDEEDYDS (115 aa). Positions 98–108 are enriched in basic and acidic residues; sequence EDNHMDGDKGA. The span at 114–125 shows a compositional bias: gly residues; the sequence is PGSGGRKNGGMG. Residues 138–155 are compositionally biased toward acidic residues; it reads SEQEDESEDTDTDGEEET. Pro residues predominate over residues 184-193; the sequence is PLPPAPPGPS. Positions 195–205 are enriched in acidic residues; sequence PDEEDEEDYDS.

It belongs to the NC2 alpha/DRAP1 family. Heterodimer with DR1. Binds BTAF1. In terms of processing, phosphorylation reduces DNA binding, but has no effect on heterodimerization and TBP binding. Ubiquitous. Highly expressed in adult testis, heart, skeletal muscle, pancreas and brain, and in fetal brain, liver and kidney.

The protein resides in the nucleus. Its function is as follows. The association of the DR1/DRAP1 heterodimer with TBP results in a functional repression of both activated and basal transcription of class II genes. This interaction precludes the formation of a transcription-competent complex by inhibiting the association of TFIIA and/or TFIIB with TBP. Can bind to DNA on its own. The chain is Dr1-associated corepressor (DRAP1) from Homo sapiens (Human).